Consider the following 138-residue polypeptide: Large ribosomal subunit protein uL16 (138 aa).

Residues 1–15 (MLSPRKVKYRKKQRG) show a composition bias toward basic residues. Positions 1-20 (MLSPRKVKYRKKQRGRLSGE) are disordered.

It belongs to the universal ribosomal protein uL16 family. Part of the 50S ribosomal subunit.

Its function is as follows. Binds 23S rRNA and is also seen to make contacts with the A and possibly P site tRNAs. The polypeptide is Large ribosomal subunit protein uL16 (Borrelia turicatae (strain 91E135)).